The sequence spans 292 residues: Formamidopyrimidine-DNA glycosylase (292 aa).

Residue proline 2 is the Schiff-base intermediate with DNA of the active site. Glutamate 3 functions as the Proton donor in the catalytic mechanism. Lysine 61 (proton donor; for beta-elimination activity) is an active-site residue. Positions 96, 115, and 161 each coordinate DNA. The FPG-type zinc-finger motif lies at 247 to 281 (SAYGQEDRPCPRCGTAIRREKFMNRSSFSCPKCQP). Residue arginine 271 is the Proton donor; for delta-elimination activity of the active site.

The protein belongs to the FPG family. In terms of assembly, monomer. It depends on Zn(2+) as a cofactor.

The catalysed reaction is Hydrolysis of DNA containing ring-opened 7-methylguanine residues, releasing 2,6-diamino-4-hydroxy-5-(N-methyl)formamidopyrimidine.. It carries out the reaction 2'-deoxyribonucleotide-(2'-deoxyribose 5'-phosphate)-2'-deoxyribonucleotide-DNA = a 3'-end 2'-deoxyribonucleotide-(2,3-dehydro-2,3-deoxyribose 5'-phosphate)-DNA + a 5'-end 5'-phospho-2'-deoxyribonucleoside-DNA + H(+). Functionally, involved in base excision repair of DNA damaged by oxidation or by mutagenic agents. Acts as a DNA glycosylase that recognizes and removes damaged bases. Has a preference for oxidized purines, such as 7,8-dihydro-8-oxoguanine (8-oxoG). Has AP (apurinic/apyrimidinic) lyase activity and introduces nicks in the DNA strand. Cleaves the DNA backbone by beta-delta elimination to generate a single-strand break at the site of the removed base with both 3'- and 5'-phosphates. The polypeptide is Formamidopyrimidine-DNA glycosylase (Rhodococcus jostii (strain RHA1)).